The chain runs to 199 residues: Charged multivesicular body protein 1b (199 aa).

Residues 26-48 (DKEEKAEKAKIKKAIQKGNMEVA) are a coiled coil. An interaction with IST1 region spans residues 132–156 (MEDTMSSTTTLTTPQGQVDMLLQEM). The segment at 167-199 (ELPQGQTGSVGTSVASAEQDELSQRLARLRDQV) is disordered. The span at 170–182 (QGQTGSVGTSVAS) shows a compositional bias: polar residues. The interaction with SPAST stretch occupies residues 174 to 199 (GSVGTSVASAEQDELSQRLARLRDQV). Residues 178-199 (TSVASAEQDELSQRLARLRDQV) adopt a coiled-coil conformation. Residues 180–196 (VASAEQDELSQRLARLR) form an interaction with VPS4A, MITD1 and STAMBP region. Residues 180-199 (VASAEQDELSQRLARLRDQV) form an interaction with VTA1 region. The interaction with VPS4B stretch occupies residues 183 to 199 (AEQDELSQRLARLRDQV). The MIT-interacting motif motif lies at 186–196 (DELSQRLARLR).

The protein belongs to the SNF7 family. As to quaternary structure, probable peripherally associated component of the endosomal sorting required for transport complex III (ESCRT-III). ESCRT-III components are thought to multimerize to form a flat lattice on the perimeter membrane of the endosome. Several assembly forms of ESCRT-III may exist that interact and act sequentially. Interacts with CHMP1A. Interacts with VTA1; the interaction probably involves the open conformation of CHMP1B. Interacts with CHMP2A. Interacts with VPS4A; the interaction is direct. Interacts with VPS4B; the interaction is direct. Interacts with SPAST (via MIT domain); the interaction is direct. Interacts with IST1. Interacts with MITD1. Interacts with STAMBP.

Its subcellular location is the cytoplasm. The protein localises to the cytosol. The protein resides in the endosome. It localises to the late endosome membrane. Its function is as follows. Probable peripherally associated component of the endosomal sorting required for transport complex III (ESCRT-III) which is involved in multivesicular bodies (MVBs) formation and sorting of endosomal cargo proteins into MVBs. MVBs contain intraluminal vesicles (ILVs) that are generated by invagination and scission from the limiting membrane of the endosome and mostly are delivered to lysosomes enabling degradation of membrane proteins, such as stimulated growth factor receptors, lysosomal enzymes and lipids. The MVB pathway appears to require the sequential function of ESCRT-O, -I,-II and -III complexes. ESCRT-III proteins mostly dissociate from the invaginating membrane before the ILV is released. The ESCRT machinery also functions in topologically equivalent membrane fission events, such as the terminal stages of cytokinesis and the budding of enveloped viruses (lentiviruses). ESCRT-III proteins are believed to mediate the necessary vesicle extrusion and/or membrane fission activities, possibly in conjunction with the AAA ATPase VPS4. Involved in cytokinesis. Involved in recruiting VPS4A and/or VPS4B and SPAST to the midbody of dividing cells. This Bos taurus (Bovine) protein is Charged multivesicular body protein 1b (CHMP1B).